A 355-amino-acid polypeptide reads, in one-letter code: Peptide chain release factor 1 (355 aa).

Glutamine 232 is subject to N5-methylglutamine.

The protein belongs to the prokaryotic/mitochondrial release factor family. Post-translationally, methylated by PrmC. Methylation increases the termination efficiency of RF1.

Its subcellular location is the cytoplasm. Peptide chain release factor 1 directs the termination of translation in response to the peptide chain termination codons UAG and UAA. The chain is Peptide chain release factor 1 from Thermobifida fusca (strain YX).